Consider the following 1172-residue polypeptide: DNA-directed RNA polymerase subunit beta (1172 aa).

The protein belongs to the RNA polymerase beta chain family. The RNAP catalytic core consists of 2 alpha, 1 beta, 1 beta' and 1 omega subunit. When a sigma factor is associated with the core the holoenzyme is formed, which can initiate transcription.

It carries out the reaction RNA(n) + a ribonucleoside 5'-triphosphate = RNA(n+1) + diphosphate. In terms of biological role, DNA-dependent RNA polymerase catalyzes the transcription of DNA into RNA using the four ribonucleoside triphosphates as substrates. The sequence is that of DNA-directed RNA polymerase subunit beta from Mycobacterium sp. (strain JLS).